The chain runs to 391 residues: MTFLSPPEIPTIKADNGTYYDFNNGARILFPKGEWHVNIIDEESGNILFSCDTKAGWVTSTKKYYVKFRIQAFKKGDEKPFLDTVMELKDKPVLISFPTGTLGDIIAWFHYAEKFRIKHQCKLECSVSEEFITLLSDNYPDIKFTSAQDKYEGKPYATYRIGLFFNGDTDNQPVDFRLVGFHRNAGYILGVSPQEDPPRLNLSAERKIQEPYVCIAVQSTAQAKHWNNGLGWAEVVRYLKELGYRVLCIDRNAHAGNGFVWNHIPWGAEDFTGALPLQERVDLLRHASFFVGLSSGLSWLAWASRIPVVLISGFSRPDSEFYTPWRVFNSHGCNGCWDNTNYNFDHTDFLWCPVHKGTDRQFECTRLITGKQVCGVIRTLHSYLTNHDRII.

Positions 101, 102, and 103 each coordinate ADP-D-glycero-beta-D-manno-heptose. Catalysis depends on Asp-104, which acts as the Proton acceptor. Residues Gln-218, Thr-220, Lys-224, Arg-251, Leu-275, Gly-296, and Glu-320 each coordinate ADP-D-glycero-beta-D-manno-heptose. Fe(3+) contacts are provided by Cys-333, Cys-336, Cys-352, and Cys-364.

Belongs to the glycosyltransferase 9 family. Homododecamer composed of 6 homodimers forming a ring. Requires Fe(3+) as cofactor.

The protein localises to the cytoplasm. The enzyme catalyses ADP-D-glycero-beta-D-manno-heptose + L-seryl-[protein] = O-(D-glycero-alpha-D-manno-heptosyl)-L-seryl-[protein] + ADP + H(+). It carries out the reaction ADP-L-glycero-beta-D-manno-heptose + L-seryl-[protein] = O-(L-glycero-alpha-D-manno-heptosyl)-L-seryl-[protein] + ADP + H(+). Functionally, glycosylates autotransporter AIDA-I. Catalyzes the addition of both L, D-heptose and D, D-heptose sugars. Probably by glycosylating AIDA-I, involved in bacteria adhesion to host mammalian cells. This Escherichia coli protein is Autotransporter heptosyltransferase Aah.